The primary structure comprises 355 residues: uncharacterized protein (355 aa).

Cysteine 2 functions as the For GATase activity in the catalytic mechanism. Positions 2–248 (CELLGICFNK…NGELMVFKNG (247 aa)) constitute a Glutamine amidotransferase type-2 domain.

This is an uncharacterized protein from Methanocaldococcus jannaschii (strain ATCC 43067 / DSM 2661 / JAL-1 / JCM 10045 / NBRC 100440) (Methanococcus jannaschii).